The sequence spans 81 residues: ATP synthase subunit C, plastid (81 aa).

Helical transmembrane passes span 3–23 and 57–77; these read PIISAASVIAAGFAVGLASIG and LAFMEALTIYGLVVALALLFA.

Belongs to the ATPase C chain family. F-type ATPases have 2 components, F(1) - the catalytic core - and F(0) - the membrane proton channel. F(1) has five subunits: alpha(3), beta(3), gamma(1), delta(1), epsilon(1). F(0) has four main subunits: a(1), b(1), b'(1) and c(10-14). The alpha and beta chains form an alternating ring which encloses part of the gamma chain. F(1) is attached to F(0) by a central stalk formed by the gamma and epsilon chains, while a peripheral stalk is formed by the delta, b and b' chains.

The protein localises to the plastid membrane. Its function is as follows. F(1)F(0) ATP synthase produces ATP from ADP in the presence of a proton or sodium gradient. F-type ATPases consist of two structural domains, F(1) containing the extramembraneous catalytic core and F(0) containing the membrane proton channel, linked together by a central stalk and a peripheral stalk. During catalysis, ATP synthesis in the catalytic domain of F(1) is coupled via a rotary mechanism of the central stalk subunits to proton translocation. In terms of biological role, key component of the F(0) channel; it plays a direct role in translocation across the membrane. A homomeric c-ring of between 10-14 subunits forms the central stalk rotor element with the F(1) delta and epsilon subunits. This chain is ATP synthase subunit C, plastid, found in Cuscuta gronovii (Common dodder).